Here is a 187-residue protein sequence, read N- to C-terminus: ATP synthase subunit delta, chloroplastic (187 aa).

It belongs to the ATPase delta chain family. F-type ATPases have 2 components, F(1) - the catalytic core - and F(0) - the membrane proton channel. F(1) has five subunits: alpha(3), beta(3), gamma(1), delta(1), epsilon(1). CF(0) has four main subunits: a(1), b(1), b'(1) and c(10-14). The alpha and beta chains form an alternating ring which encloses part of the gamma chain. F(1) is attached to F(0) by a central stalk formed by the gamma and epsilon chains, while a peripheral stalk is formed by the delta, b and b' chains.

Its subcellular location is the plastid. It is found in the chloroplast thylakoid membrane. Its function is as follows. F(1)F(0) ATP synthase produces ATP from ADP in the presence of a proton or sodium gradient. F-type ATPases consist of two structural domains, F(1) containing the extramembraneous catalytic core and F(0) containing the membrane proton channel, linked together by a central stalk and a peripheral stalk. During catalysis, ATP synthesis in the catalytic domain of F(1) is coupled via a rotary mechanism of the central stalk subunits to proton translocation. In terms of biological role, this protein is part of the stalk that links CF(0) to CF(1). It either transmits conformational changes from CF(0) to CF(1) or is implicated in proton conduction. This is ATP synthase subunit delta, chloroplastic from Thalassiosira pseudonana (Marine diatom).